A 114-amino-acid chain; its full sequence is Protein lin-52 homolog (114 aa).

A phosphoserine mark is found at Ser26 and Ser51.

The protein belongs to the lin-52 family. In terms of assembly, component of the DREAM complex (also named LINC complex) at least composed of E2F4, E2F5, LIN9, LIN37, LIN52, LIN54, MYBL1, MYBL2, RBL1, RBL2, RBBP4, TFDP1 and TFDP2. The complex exists in quiescent cells where it represses cell cycle-dependent genes. It dissociates in S phase when LIN9, LIN37, LIN52 and LIN54 form a subcomplex that binds to MYBL2.

This is Protein lin-52 homolog (LIN52) from Pongo abelii (Sumatran orangutan).